Consider the following 256-residue polypeptide: UPF0246 protein Bpet1601 (256 aa).

The protein belongs to the UPF0246 family.

The polypeptide is UPF0246 protein Bpet1601 (Bordetella petrii (strain ATCC BAA-461 / DSM 12804 / CCUG 43448)).